A 228-amino-acid chain; its full sequence is Max-interacting protein 1 (228 aa).

Disordered stretches follow at residues 29-76 (GYAS…NELE) and 162-228 (GSTI…SFTS). Over residues 43–56 (QHSKPPRRLSRAQK) the composition is skewed to basic residues. Residues 57-70 (HSSGSSNTSTANRS) are compositionally biased toward polar residues. The bHLH domain maps to 67 to 119 (ANRSTHNELEKNRRAHLRLCLERLKVLIPLGPDCTRHTTLGLLNKAKAHIKKL). Residues 173–183 (EREEIEVDVES) show a composition bias toward acidic residues. A compositionally biased stretch (polar residues) spans 216–228 (GYSSASVKLSFTS).

Efficient DNA binding requires dimerization with another bHLH protein. Binds DNA as a heterodimer with MAX. Interacts with SMC3. Interacts with RNF17.

Its subcellular location is the nucleus. Transcriptional repressor. MXI1 binds with MAX to form a sequence-specific DNA-binding protein complex which recognizes the core sequence 5'-CAC[GA]TG-3'. MXI1 thus antagonizes MYC transcriptional activity by competing for MAX. This chain is Max-interacting protein 1 (Mxi1), found in Rattus norvegicus (Rat).